A 107-amino-acid chain; its full sequence is Large ribosomal subunit protein uL24 (107 aa).

This sequence belongs to the universal ribosomal protein uL24 family. As to quaternary structure, part of the 50S ribosomal subunit.

In terms of biological role, one of two assembly initiator proteins, it binds directly to the 5'-end of the 23S rRNA, where it nucleates assembly of the 50S subunit. Its function is as follows. One of the proteins that surrounds the polypeptide exit tunnel on the outside of the subunit. This is Large ribosomal subunit protein uL24 from Fervidobacterium nodosum (strain ATCC 35602 / DSM 5306 / Rt17-B1).